The sequence spans 368 residues: Putative phospho-2-dehydro-3-deoxyheptonate aldolase (368 aa).

The protein belongs to the class-I DAHP synthase family.

The enzyme catalyses D-erythrose 4-phosphate + phosphoenolpyruvate + H2O = 7-phospho-2-dehydro-3-deoxy-D-arabino-heptonate + phosphate. It participates in metabolic intermediate biosynthesis; chorismate biosynthesis; chorismate from D-erythrose 4-phosphate and phosphoenolpyruvate: step 1/7. Stereospecific condensation of phosphoenolpyruvate (PEP) and D-erythrose-4-phosphate (E4P) giving rise to 3-deoxy-D-arabino-heptulosonate-7-phosphate (DAHP). This Schizosaccharomyces pombe (strain 972 / ATCC 24843) (Fission yeast) protein is Putative phospho-2-dehydro-3-deoxyheptonate aldolase.